Reading from the N-terminus, the 38-residue chain is Allatostatin-C (38 aa).

Positions 1-19 are excised as a propeptide; the sequence is MRRALDGPGSSSLDTRQAD. Q22 carries the post-translational modification Pyrrolidone carboxylic acid; partial.

This sequence belongs to the allatostatin family. In terms of tissue distribution, in its non-pyroglutamate form, expressed in antennal lobe (AL), corpora cardiaca (CC), corpora allata (CA) and gnathal ganglion (GNG) with expression in AL detected in most animals and expression in CC, CA and GNG detected in few animals (at protein level). In its pyroglutamate form, expressed in antennal lobe (AL), corpora cardiaca (CC) and corpora allata (CA) with expression detected in few animals (at protein level). Not expressed in GNG (protein level).

The protein localises to the secreted. Strongly inhibits juvenile hormone biosynthesis. In Agrotis ipsilon (Black cutworm moth), this protein is Allatostatin-C.